The following is a 75-amino-acid chain: Small ribosomal subunit protein bS18 (75 aa).

This sequence belongs to the bacterial ribosomal protein bS18 family. In terms of assembly, part of the 30S ribosomal subunit. Forms a tight heterodimer with protein bS6.

Binds as a heterodimer with protein bS6 to the central domain of the 16S rRNA, where it helps stabilize the platform of the 30S subunit. The protein is Small ribosomal subunit protein bS18 of Pasteurella multocida (strain Pm70).